Reading from the N-terminus, the 129-residue chain is Small ribosomal subunit protein uS9 (129 aa).

Residues Ser-107–Arg-129 form a disordered region. Basic residues predominate over residues Lys-114 to Arg-129.

Belongs to the universal ribosomal protein uS9 family.

The sequence is that of Small ribosomal subunit protein uS9 from Sulfurovum sp. (strain NBC37-1).